We begin with the raw amino-acid sequence, 148 residues long: Antitoxin Xre (148 aa).

Belongs to the MbcA/ParS/Xre antitoxin family. In terms of assembly, homodimer. Forms a complex with cognate toxin Rse.

In terms of biological role, antitoxin component of a type II toxin-antitoxin (TA) system. Neutralizes the activity of cognate toxin Res. The polypeptide is Antitoxin Xre (Yersinia enterocolitica serotype O:8 / biotype 1B (strain NCTC 13174 / 8081)).